A 320-amino-acid polypeptide reads, in one-letter code: Chitinase 3 (320 aa).

An N-terminal signal peptide occupies residues 1-18 (MRALALAVVAMAVVAVRG). The region spanning 19 to 59 (EQCGSQAGGALCPNCLCCSQYGWCGSTSDYCGAGCQSQCSG) is the Chitin-binding type-1 domain. 8 disulfides stabilise this stretch: cysteine 21–cysteine 36, cysteine 30–cysteine 42, cysteine 33–cysteine 61, cysteine 35–cysteine 49, cysteine 53–cysteine 57, cysteine 97–cysteine 159, cysteine 172–cysteine 180, and cysteine 279–cysteine 311. The active-site Proton donor is the glutamate 141.

It belongs to the glycosyl hydrolase 19 family. Chitinase class I subfamily. In terms of tissue distribution, expressed at low levels in roots, leaves, sheaths and meristems.

The enzyme catalyses Random endo-hydrolysis of N-acetyl-beta-D-glucosaminide (1-&gt;4)-beta-linkages in chitin and chitodextrins.. Functionally, hydrolyzes chitin and plays a role in defense against fungal pathogens containing chitin. Inhibits the growth of T.reesei fungus on plate assay. The protein is Chitinase 3 (Cht3) of Oryza sativa subsp. japonica (Rice).